We begin with the raw amino-acid sequence, 356 residues long: Vesicular integral-membrane protein VIP36 (356 aa).

The first 44 residues, 1–44, serve as a signal peptide directing secretion; it reads MAAEGWIWRWGWGRRCLGRPGLPGPGPGPATPLFLLLLLGPVVA. The Lumenal segment spans residues 45-322; that stretch reads DITDGNSEHL…FRSGPLTGWR (278 aa). The 225-residue stretch at 52–276 folds into the L-type lectin-like domain; sequence EHLKREHSLI…DIISMKLFQL (225 aa). Positions 96 and 131 each coordinate a carbohydrate. Residues aspartate 162, tyrosine 164, and asparagine 166 each coordinate Ca(2+). 164-166 is an a carbohydrate binding site; sequence YPN. N-linked (GlcNAc...) asparagine glycosylation occurs at asparagine 183. Histidine 190 lines the a carbohydrate pocket. A Ca(2+)-binding site is contributed by aspartate 193. A disulfide bridge connects residues cysteine 202 and cysteine 239. Residue 260-262 participates in a carbohydrate binding; it reads GDL. A helical membrane pass occupies residues 323 to 345; the sequence is VFLLLLCALLGIIVCAVVGAVVF. The Cytoplasmic portion of the chain corresponds to 346–356; that stretch reads QKRQERNKRFY.

As to quaternary structure, monomer. Ca(2+) is required as a cofactor. Expressed in kidney, liver, intestine, lung, spleen and heart. Low expression in brain.

It localises to the golgi apparatus membrane. Its function is as follows. Plays a role as an intracellular lectin in the early secretory pathway. Interacts with N-acetyl-D-galactosamine and high-mannose type glycans and may also bind to O-linked glycans. Involved in the transport and sorting of glycoproteins carrying high mannose-type glycans. The polypeptide is Vesicular integral-membrane protein VIP36 (LMAN2) (Canis lupus familiaris (Dog)).